A 318-amino-acid chain; its full sequence is ATP phosphoribosyltransferase regulatory subunit (318 aa).

It belongs to the class-II aminoacyl-tRNA synthetase family. HisZ subfamily. As to quaternary structure, heteromultimer composed of HisG and HisZ subunits.

The protein localises to the cytoplasm. It functions in the pathway amino-acid biosynthesis; L-histidine biosynthesis; L-histidine from 5-phospho-alpha-D-ribose 1-diphosphate: step 1/9. Functionally, required for the first step of histidine biosynthesis. May allow the feedback regulation of ATP phosphoribosyltransferase activity by histidine. The polypeptide is ATP phosphoribosyltransferase regulatory subunit (Lactococcus lactis subsp. cremoris (strain MG1363)).